Consider the following 374-residue polypeptide: Probable carboxylesterase 4, mitochondrial (374 aa).

The N-terminal 52 residues, 1–52, are a transit peptide targeting the mitochondrion; the sequence is MLRRITCSSSLASPSLFLRFFRQLPRSYSSPTTIAVSGRNIRRLSTPTTLRC. The Involved in the stabilization of the negatively charged intermediate by the formation of the oxyanion hole motif lies at 135–137; the sequence is HGG. Active-site residues include S219, D317, and H349.

This sequence belongs to the 'GDXG' lipolytic enzyme family. In terms of tissue distribution, expressed in leaves, stems, flowers and siliques.

It localises to the mitochondrion. It catalyses the reaction a carboxylic ester + H2O = an alcohol + a carboxylate + H(+). Functionally, carboxylesterase acting on esters with varying acyl chain length. The chain is Probable carboxylesterase 4, mitochondrial (CXE4) from Arabidopsis thaliana (Mouse-ear cress).